The primary structure comprises 529 residues: Ribonuclease Y (529 aa).

The helical transmembrane segment at glycine 4–tyrosine 24 threads the bilayer. One can recognise a KH domain in the interval leucine 216–valine 297. The region spanning alanine 342 to glycine 435 is the HD domain.

It belongs to the RNase Y family.

The protein resides in the cell membrane. Endoribonuclease that initiates mRNA decay. This Helicobacter pylori (strain ATCC 700392 / 26695) (Campylobacter pylori) protein is Ribonuclease Y.